A 338-amino-acid chain; its full sequence is MLDDRARLLLKALVERYIADGQPVGSRTLSRASGLELSPATIRNVMSDLEELGLIVSPHTSAGRIPTARGYRLFVDTMLTTQRDQLSAGHITAPRLAPDQPQKVISNAAHMLSSLSQFVGVVMAPRRTSVFRHIEFLRLSEKRFLVIIVSPDGDVQNRVIFTEADYTQSQLIEASNFLNSHYAGMAIEEVRERLQNEVEALRGEIATLMQAAVQVSSEAIESRDEVVVSGERNLLAVSDFSSDMGNLRKLFDLFEQKAQLMRLLDVSSRAEGVRIYIGGESQVIPYQELSVVTAPYEVDGQVVGTLGVIGPMRMPYEKMIQIVDITSKLVSTALSHSK.

It belongs to the HrcA family.

In terms of biological role, negative regulator of class I heat shock genes (grpE-dnaK-dnaJ and groELS operons). Prevents heat-shock induction of these operons. The chain is Heat-inducible transcription repressor HrcA from Polaromonas sp. (strain JS666 / ATCC BAA-500).